The sequence spans 298 residues: Probable tRNA(His) guanylyltransferase (298 aa).

Mg(2+)-binding residues include D58, G59, and D105. Residues 58–63 (DGRNFH) and 104–105 (SD) contribute to the GTP site.

It belongs to the tRNA(His) guanylyltransferase family. As to quaternary structure, homotetramer. Interacts with MFN1 and MFN2; functions as a guanyl-nucleotide exchange factor/GEF for MFN2 and also probably MFN1. Mg(2+) serves as cofactor.

It is found in the cytoplasm. The protein localises to the mitochondrion. The catalysed reaction is a 5'-end ribonucleotide-tRNA(His) + GTP + ATP + H2O = a 5'-end phospho-guanosine-ribonucleotide-tRNA(His) + AMP + 2 diphosphate + H(+). Functionally, adds a GMP to the 5'-end of tRNA(His) after transcription and RNase P cleavage. This step is essential for proper recognition of the tRNA and for the fidelity of protein synthesis. Also functions as a guanyl-nucleotide exchange factor/GEF for the MFN1 and MFN2 mitofusins thereby regulating mitochondrial fusion. By regulating both mitochondrial dynamics and bioenergetic function, it contributes to cell survival following oxidative stress. This chain is Probable tRNA(His) guanylyltransferase (Thg1l), found in Mus musculus (Mouse).